The chain runs to 426 residues: 3-phosphoshikimate 1-carboxyvinyltransferase (426 aa).

3-phosphoshikimate is bound by residues lysine 23, serine 24, and arginine 28. Residue lysine 23 participates in phosphoenolpyruvate binding. Phosphoenolpyruvate is bound by residues glycine 96 and arginine 124. 3-phosphoshikimate contacts are provided by threonine 170, serine 171, glutamine 172, serine 198, aspartate 314, and lysine 341. Glutamine 172 lines the phosphoenolpyruvate pocket. Aspartate 314 acts as the Proton acceptor in catalysis. Phosphoenolpyruvate-binding residues include arginine 345, arginine 386, and lysine 411.

It belongs to the EPSP synthase family. Monomer.

It localises to the cytoplasm. The catalysed reaction is 3-phosphoshikimate + phosphoenolpyruvate = 5-O-(1-carboxyvinyl)-3-phosphoshikimate + phosphate. Its pathway is metabolic intermediate biosynthesis; chorismate biosynthesis; chorismate from D-erythrose 4-phosphate and phosphoenolpyruvate: step 6/7. Its function is as follows. Catalyzes the transfer of the enolpyruvyl moiety of phosphoenolpyruvate (PEP) to the 5-hydroxyl of shikimate-3-phosphate (S3P) to produce enolpyruvyl shikimate-3-phosphate and inorganic phosphate. The protein is 3-phosphoshikimate 1-carboxyvinyltransferase of Trichormus variabilis (strain ATCC 29413 / PCC 7937) (Anabaena variabilis).